The sequence spans 144 residues: Large ribosomal subunit protein uL13 (144 aa).

This sequence belongs to the universal ribosomal protein uL13 family. As to quaternary structure, part of the 50S ribosomal subunit.

Functionally, this protein is one of the early assembly proteins of the 50S ribosomal subunit, although it is not seen to bind rRNA by itself. It is important during the early stages of 50S assembly. The sequence is that of Large ribosomal subunit protein uL13 from Herpetosiphon aurantiacus (strain ATCC 23779 / DSM 785 / 114-95).